The sequence spans 376 residues: MRTRAAVAVEAGKPLEIMEVNLEGPKAGEVMVEIKATGICHTDEFTLSGADPEGMFPAILGHEGAGVVVEVGPGVTSVKPGDHVIPLYTPECRQCPSCLSQKTNLCTAIRGTQGQGLMPDGTSRFSMLDGTPILHYMGCSTFSNYTVLPEIAVAKVRPDAPFDKICYIGCGVTTGIGAVINTAKVEIGAKAVVFGLGGIGLNVIQGLKLAGADMIIGVDLNNAKKEWGERFGMTHFVNPSEIDGDVVAHLVNMTKTPFDQIGGADYTFDCTGNVKVMRQALEACHRGWGQSIVIGVAPAGAEIQTRPFQLVTGRVWKGSAFGGARGRTDVPKIVDWYMEGKIQIDPMITHILSLEEINKGFDLMHAGESIRSVVVF.

The Zn(2+) site is built by Cys40, His62, Cys92, Cys95, Cys98, Cys106, and Cys170.

It belongs to the zinc-containing alcohol dehydrogenase family. Class-III subfamily. As to quaternary structure, homodimer. The cofactor is Zn(2+).

It is found in the cytoplasm. The enzyme catalyses a primary alcohol + NAD(+) = an aldehyde + NADH + H(+). The catalysed reaction is a secondary alcohol + NAD(+) = a ketone + NADH + H(+). It carries out the reaction S-(hydroxymethyl)glutathione + NADP(+) = S-formylglutathione + NADPH + H(+). It catalyses the reaction S-(hydroxymethyl)glutathione + NAD(+) = S-formylglutathione + NADH + H(+). Oxidizes long-chain aliphatic alcohols, long-chain hydroxylated fatty acids and S-hydroxymethylglutathione (hmGSH) in increasing order of preference. Shows little or no activity with short-chain aliphatic alcohols. In Cereibacter sphaeroides (strain ATCC 17023 / DSM 158 / JCM 6121 / CCUG 31486 / LMG 2827 / NBRC 12203 / NCIMB 8253 / ATH 2.4.1.) (Rhodobacter sphaeroides), this protein is Alcohol dehydrogenase class-3 (adhI).